Here is a 378-residue protein sequence, read N- to C-terminus: Ribosomal RNA large subunit methyltransferase G (378 aa).

It belongs to the methyltransferase superfamily. RlmG family.

Its subcellular location is the cytoplasm. It carries out the reaction guanosine(1835) in 23S rRNA + S-adenosyl-L-methionine = N(2)-methylguanosine(1835) in 23S rRNA + S-adenosyl-L-homocysteine + H(+). Functionally, specifically methylates the guanine in position 1835 (m2G1835) of 23S rRNA. This Salmonella heidelberg (strain SL476) protein is Ribosomal RNA large subunit methyltransferase G.